Consider the following 428-residue polypeptide: Adenylosuccinate synthetase (428 aa).

GTP-binding positions include 12 to 18 and 40 to 42; these read GDEGKGK and GHT. The active-site Proton acceptor is the D13. Mg(2+) contacts are provided by D13 and G40. IMP is bound by residues 13-16, 38-41, T128, R142, Q223, T238, and R302; these read DEGK and NAGH. Catalysis depends on H41, which acts as the Proton donor. 298 to 304 is a binding site for substrate; the sequence is VTTGRPR. Residues R304, 330–332, and 413–415 each bind GTP; these read KLD and GVG.

It belongs to the adenylosuccinate synthetase family. Homodimer. Mg(2+) serves as cofactor.

The protein localises to the cytoplasm. The enzyme catalyses IMP + L-aspartate + GTP = N(6)-(1,2-dicarboxyethyl)-AMP + GDP + phosphate + 2 H(+). It participates in purine metabolism; AMP biosynthesis via de novo pathway; AMP from IMP: step 1/2. Functionally, plays an important role in the de novo pathway of purine nucleotide biosynthesis. Catalyzes the first committed step in the biosynthesis of AMP from IMP. The polypeptide is Adenylosuccinate synthetase (Acidothermus cellulolyticus (strain ATCC 43068 / DSM 8971 / 11B)).